The sequence spans 269 residues: Carbohydrate metabolism regulator TYE7 (269 aa).

A disordered region spans residues 146 to 178 (QPKIKQEPGTKAATKPKRRAPRKKLTESQKKAH). The span at 159–168 (TKPKRRAPRK) shows a compositional bias: basic residues. The segment covering 169-178 (KLTESQKKAH) has biased composition (basic and acidic residues). The region spanning 173 to 244 (SQKKAHNKIE…EKATEYILHL (72 aa)) is the bHLH domain.

Efficient DNA binding requires dimerization with another bHLH protein.

Its subcellular location is the nucleus. Its function is as follows. Key transcriptional regulator of carbohydrate metabolism. Binds the promoter sequences of the glycolytic genes at the CANNTG motif and activates their expression during growth on either fermentable or non-fermentable carbon sources as well as under hypoxic growth conditions. Complete glycolytic activation by GAL4 and TYE7 is required for full virulence. Involved in biofilm formation and negatively regulates hyphal formation under hypoxia. Also controls the expression of the copper transport protein CTR1. The polypeptide is Carbohydrate metabolism regulator TYE7 (TYE7) (Candida albicans (strain SC5314 / ATCC MYA-2876) (Yeast)).